The sequence spans 152 residues: Ribosomal RNA large subunit methyltransferase H (152 aa).

S-adenosyl-L-methionine contacts are provided by residues L69, G96, and 118-123 (FGKLTF).

This sequence belongs to the RNA methyltransferase RlmH family. Homodimer.

The protein resides in the cytoplasm. The enzyme catalyses pseudouridine(1915) in 23S rRNA + S-adenosyl-L-methionine = N(3)-methylpseudouridine(1915) in 23S rRNA + S-adenosyl-L-homocysteine + H(+). Functionally, specifically methylates the pseudouridine at position 1915 (m3Psi1915) in 23S rRNA. This is Ribosomal RNA large subunit methyltransferase H from Mesomycoplasma hyopneumoniae (strain 232) (Mycoplasma hyopneumoniae).